A 464-amino-acid polypeptide reads, in one-letter code: GDNF family receptor alpha-2 (464 aa).

Residues 1 to 21 (MILANVFCLFFFLDETLRSLA) form the signal peptide. Disulfide bonds link C40/C93, C95/C105, C161/C222, C168/C174, C185/C200, C195/C241, C224/C229, C251/C323, C258/C264, C275/C293, and C285/C347. N-linked (GlcNAc...) asparagine glycosylation occurs at N52. N357 carries N-linked (GlcNAc...) asparagine glycosylation. Residues 363–392 (VSPKGPSFQATQAPRVEKTPSLPDDLSDST) form a disordered region. A compositionally biased stretch (low complexity) spans 381-392 (TPSLPDDLSDST). An N-linked (GlcNAc...) asparagine glycan is attached at N413. S444 carries the GPI-anchor amidated serine lipid modification. Residues 445 to 464 (RARPSAALTVLSVLMLKLAL) constitute a propeptide, removed in mature form.

This sequence belongs to the GDNFR family. Interacts with NRTN ligand and RET: forms a 2:2:2 ternary complex composed of NRTN ligand, GFRA2 and RET receptor. Also forms a 4:4:4 tetrameric complex composed of 4 copies of NRTN ligand, GFRA2 and RET receptor, which prevents endocytosis of RET. Interacts with SORL1. Found in both brain and placenta.

Its subcellular location is the cell membrane. Receptor for neurturin (NRTN), a growth factor that supports the survival of sympathetic neurons. NRTN-binding leads to autophosphorylation and activation of the RET receptor. Also able to mediate GDNF signaling through the RET tyrosine kinase receptor. In terms of biological role, participates in NRTN-induced 'Ser-727' phosphorylation of STAT3. This Homo sapiens (Human) protein is GDNF family receptor alpha-2 (GFRA2).